Here is a 27-residue protein sequence, read N- to C-terminus: L-amino-acid oxidase (27 aa).

Homodimer; non-covalently linked. Requires FAD as cofactor. In terms of processing, contains 2 disulfide bonds. N-glycosylated. In terms of tissue distribution, expressed by the venom gland.

The protein localises to the secreted. The catalysed reaction is an L-alpha-amino acid + O2 + H2O = a 2-oxocarboxylate + H2O2 + NH4(+). It carries out the reaction L-leucine + O2 + H2O = 4-methyl-2-oxopentanoate + H2O2 + NH4(+). Functionally, catalyzes an oxidative deamination of predominantly hydrophobic and aromatic L-amino acids, thus producing hydrogen peroxide that may contribute to the diverse toxic effects of this enzyme. Shows activity on L-Leu. Exhibits diverse biological activities, such as hemolysis, edema, apoptosis, as well as induction of platelet aggregation. Effects of snake L-amino oxidases on platelets are controversial, since they either induce aggregation or inhibit agonist-induced aggregation. These different effects are probably due to different experimental conditions. Unlike other snake venom L-amino acid oxidases, does not induce hemorrhage. This protein may also have antibacterial and antiparasitic activities. The sequence is that of L-amino-acid oxidase from Eristicophis macmahoni (Leaf-nosed viper).